Here is a 1223-residue protein sequence, read N- to C-terminus: Kinesin-like protein costa (1223 aa).

In terms of domain architecture, Kinesin motor spans 4–394; it reads PIQVAVRICP…LQFAFKVQCV (391 aa). The disordered stretch occupies residues 13–90; sequence PYTEPSENRK…LPTDSNGNEN (78 aa). Over residues 39–62 the composition is skewed to basic and acidic residues; that stretch reads AKAESFSDSEDNKNDASNRQRPEE. Residue 178 to 185 coordinates ATP; sequence GQRGQGKT. Disordered regions lie at residues 494–528, 560–604, and 625–646; these read RSQKQLVPIQEAEEPEESVSEPPNSDNDTDNESQR, KHPK…SIQP, and TAQPPPSVLDPESSIDPLESSA. Over residues 569–593 the composition is skewed to basic and acidic residues; it reads QERDKESKLDAPPEKDKEKIEERKT. Coiled coils occupy residues 658-743, 773-825, and 982-1015; these read AAAN…QGRE, ESGQ…GASG, and NKVIDLRDSSRKLELQLVQLERERDAWEWKERVL. The interval 774-799 is disordered; it reads SGQKLKKLQQSMAESRKQQEELEKKI. The span at 787–799 shows a compositional bias: basic and acidic residues; that stretch reads ESRKQQEELEKKI. Residues 1162 to 1178 are compositionally biased toward low complexity; that stretch reads TTTATATTTTTTTTTTT. Residues 1162 to 1188 are disordered; it reads TTTATATTTTTTTTTTTGGKGKERGLP.

Belongs to the TRAFAC class myosin-kinesin ATPase superfamily. Kinesin family. KIF27 subfamily. As to quaternary structure, homodimer (Potential). Binds microtubules. Interacts with ci, smo, sgg, CkIalpha and protein kinase A catalytic subunit.

It is found in the cytoplasm. The protein localises to the cytoskeleton. Its function is as follows. Regulates cubitus interruptus (ci) processing by recruiting multiple kinases to promote its efficient phosphorylation. Scaffolds multiple kinases and ci into proximity to promote its hyperphosphorylation, which then targets it for SCFSlimb/proteasome-mediated processing to generate its repressor form. Hh signaling inhibits ci phosphorylation by interfering with the cos-ci-kinases complex formation. The protein is Kinesin-like protein costa (cos) of Drosophila pseudoobscura pseudoobscura (Fruit fly).